The sequence spans 88 residues: UPF0250 protein IL0958 (88 aa).

The protein belongs to the UPF0250 family.

This is UPF0250 protein IL0958 from Idiomarina loihiensis (strain ATCC BAA-735 / DSM 15497 / L2-TR).